Here is a 368-residue protein sequence, read N- to C-terminus: Ribosomal RNA large subunit methyltransferase M (368 aa).

Residues serine 192, 225-228 (APGG), aspartate 244, aspartate 264, and aspartate 281 each bind S-adenosyl-L-methionine. The active-site Proton acceptor is the lysine 310.

It belongs to the class I-like SAM-binding methyltransferase superfamily. RNA methyltransferase RlmE family. RlmM subfamily. In terms of assembly, monomer.

The protein resides in the cytoplasm. The catalysed reaction is cytidine(2498) in 23S rRNA + S-adenosyl-L-methionine = 2'-O-methylcytidine(2498) in 23S rRNA + S-adenosyl-L-homocysteine + H(+). In terms of biological role, catalyzes the 2'-O-methylation at nucleotide C2498 in 23S rRNA. The sequence is that of Ribosomal RNA large subunit methyltransferase M from Colwellia psychrerythraea (strain 34H / ATCC BAA-681) (Vibrio psychroerythus).